Here is a 198-residue protein sequence, read N- to C-terminus: RNA 2',3'-cyclic phosphodiesterase (198 aa).

Catalysis depends on H39, which acts as the Proton donor. 2 consecutive short sequence motifs (HXTX) follow at residues 39–42 (HLTL) and 130–133 (HITL). The active-site Proton acceptor is H130.

It belongs to the 2H phosphoesterase superfamily. ThpR family.

The catalysed reaction is a 3'-end 2',3'-cyclophospho-ribonucleotide-RNA + H2O = a 3'-end 2'-phospho-ribonucleotide-RNA + H(+). In terms of biological role, hydrolyzes RNA 2',3'-cyclic phosphodiester to an RNA 2'-phosphomonoester. This is RNA 2',3'-cyclic phosphodiesterase from Thermus thermophilus (strain ATCC 27634 / DSM 579 / HB8).